The primary structure comprises 170 residues: 3-hydroxydecanoyl-[acyl-carrier-protein] dehydratase (170 aa).

Histidine 71 is a catalytic residue.

The protein belongs to the thioester dehydratase family. FabA subfamily. Homodimer.

Its subcellular location is the cytoplasm. It carries out the reaction a (3R)-hydroxyacyl-[ACP] = a (2E)-enoyl-[ACP] + H2O. The catalysed reaction is (3R)-hydroxydecanoyl-[ACP] = (2E)-decenoyl-[ACP] + H2O. It catalyses the reaction (2E)-decenoyl-[ACP] = (3Z)-decenoyl-[ACP]. It participates in lipid metabolism; fatty acid biosynthesis. In terms of biological role, necessary for the introduction of cis unsaturation into fatty acids. Catalyzes the dehydration of (3R)-3-hydroxydecanoyl-ACP to E-(2)-decenoyl-ACP and then its isomerization to Z-(3)-decenoyl-ACP. Can catalyze the dehydratase reaction for beta-hydroxyacyl-ACPs with saturated chain lengths up to 16:0, being most active on intermediate chain length. The polypeptide is 3-hydroxydecanoyl-[acyl-carrier-protein] dehydratase (Chelativorans sp. (strain BNC1)).